The sequence spans 372 residues: Putative actin-27 (372 aa).

The protein belongs to the actin family.

The protein resides in the cytoplasm. It is found in the cytoskeleton. It carries out the reaction ATP + H2O = ADP + phosphate + H(+). Its function is as follows. Actins are highly conserved proteins that are involved in various types of cell motility and are ubiquitously expressed in all eukaryotic cells. Multiple isoforms are involved in various cellular functions such as cytoskeleton structure, cell mobility, chromosome movement and muscle contraction. The chain is Putative actin-27 (act27) from Dictyostelium discoideum (Social amoeba).